Consider the following 282-residue polypeptide: Nudix hydrolase 7 (282 aa).

One can recognise a Nudix hydrolase domain in the interval 101 to 233 (SHVVGAGALV…KNEMFKFMAN (133 aa)). A Nudix box motif is present at residues 139-160 (GVINEGEDIWTGVAREVEEETG). 2 residues coordinate Mg(2+): Glu154 and Glu158.

It belongs to the Nudix hydrolase family. In terms of assembly, homodimer. Interacts with RACK1A, GG1 and GG2. Mg(2+) serves as cofactor. Expressed in stems, leaves, roots, flowers and siliques.

It localises to the nucleus. The protein localises to the cytoplasm. It is found in the cell membrane. It carries out the reaction ADP-D-ribose + H2O = D-ribose 5-phosphate + AMP + 2 H(+). The catalysed reaction is NAD(+) + H2O = beta-nicotinamide D-ribonucleotide + AMP + 2 H(+). It catalyses the reaction NADH + H2O = reduced beta-nicotinamide D-ribonucleotide + AMP + 2 H(+). Not inhibited by fluoride. Its function is as follows. Mediates the hydrolysis of some nucleoside diphosphate derivatives. Can use both NADH and ADP-ribose as substrates, but not 8-oxo-dGTP, cyclic ADP-ribose, GDP-mannose, UDP-glucose, ATP, or GTP. Exerts negative control of EDS1 signaling. This chain is Nudix hydrolase 7 (NUDT7), found in Arabidopsis thaliana (Mouse-ear cress).